We begin with the raw amino-acid sequence, 247 residues long: Exosome complex component Rrp4 (247 aa).

In terms of domain architecture, S1 motif spans 70-143 (GDTVIGLIED…INPILSIKGK (74 aa)). A KH domain is found at 149 to 211 (SSGIVIDIPP…EALVEAIQII (63 aa)).

The protein belongs to the RRP4 family. As to quaternary structure, component of the archaeal exosome complex. Forms a trimer of Rrp4 and/or Csl4 subunits. The trimer associates with a hexameric ring-like arrangement composed of 3 Rrp41-Rrp42 heterodimers.

Its subcellular location is the cytoplasm. Its function is as follows. Non-catalytic component of the exosome, which is a complex involved in RNA degradation. Increases the RNA binding and the efficiency of RNA degradation. Confers strong poly(A) specificity to the exosome. This Sulfurisphaera tokodaii (strain DSM 16993 / JCM 10545 / NBRC 100140 / 7) (Sulfolobus tokodaii) protein is Exosome complex component Rrp4.